The sequence spans 489 residues: Ribulose bisphosphate carboxylase large chain 2 (489 aa).

Substrate-binding residues include Asn-128 and Thr-178. Lys-180 (proton acceptor) is an active-site residue. Lys-182 contacts substrate. Mg(2+)-binding residues include Lys-206, Asp-208, and Glu-209. The residue at position 206 (Lys-206) is an N6-carboxylysine. His-298 functions as the Proton acceptor in the catalytic mechanism. Residues Arg-299, His-331, and Ser-383 each contribute to the substrate site.

It belongs to the RuBisCO large chain family. Type I subfamily. In terms of assembly, heterohexadecamer of 8 large chains and 8 small chains. Mg(2+) is required as a cofactor.

It carries out the reaction 2 (2R)-3-phosphoglycerate + 2 H(+) = D-ribulose 1,5-bisphosphate + CO2 + H2O. It catalyses the reaction D-ribulose 1,5-bisphosphate + O2 = 2-phosphoglycolate + (2R)-3-phosphoglycerate + 2 H(+). In terms of biological role, ruBisCO catalyzes two reactions: the carboxylation of D-ribulose 1,5-bisphosphate, the primary event in carbon dioxide fixation, as well as the oxidative fragmentation of the pentose substrate. Both reactions occur simultaneously and in competition at the same active site. This chain is Ribulose bisphosphate carboxylase large chain 2, found in Nitrobacter winogradskyi (strain ATCC 25391 / DSM 10237 / CIP 104748 / NCIMB 11846 / Nb-255).